We begin with the raw amino-acid sequence, 292 residues long: Phosphatidylglycerol--prolipoprotein diacylglyceryl transferase (292 aa).

Helical transmembrane passes span 24–44, 65–85, 110–130, and 136–156; these read ISVHWYGIMYVSAMLIALLIA, FFIWVEIGVILGGRIGYVLIY, GISGFSYHGAMAGFVLAAIIF, and QSFWIFMDLSAISIPLGYVFG. Residue R157 participates in a 1,2-diacyl-sn-glycero-3-phospho-(1'-sn-glycerol) binding. 3 consecutive transmembrane segments (helical) span residues 192-212, 219-239, and 256-276; these read SQLFEAFAEGIIVFILLICLL, GTLLVAYGVFYALARFVCEYF, and GQILSLVMLVISIFLGLFVFV.

This sequence belongs to the Lgt family.

Its subcellular location is the cell inner membrane. The enzyme catalyses L-cysteinyl-[prolipoprotein] + a 1,2-diacyl-sn-glycero-3-phospho-(1'-sn-glycerol) = an S-1,2-diacyl-sn-glyceryl-L-cysteinyl-[prolipoprotein] + sn-glycerol 1-phosphate + H(+). The protein operates within protein modification; lipoprotein biosynthesis (diacylglyceryl transfer). Functionally, catalyzes the transfer of the diacylglyceryl group from phosphatidylglycerol to the sulfhydryl group of the N-terminal cysteine of a prolipoprotein, the first step in the formation of mature lipoproteins. The polypeptide is Phosphatidylglycerol--prolipoprotein diacylglyceryl transferase (Helicobacter hepaticus (strain ATCC 51449 / 3B1)).